The chain runs to 187 residues: Putative manganese efflux pump MntP (187 aa).

6 helical membrane passes run 3–23 (MSATLILAFAMSMDAFAASIG), 41–61 (LIFGVIEAITPLIGWALGFFA), 62–82 (SQYILEWDHWVAFTLLLILGG), 107–129 (LLVCTAIATSLDAMAIGVGLAFL), 143–163 (ATMIMVTLGMMIGRYIGPILG), and 166–186 (AEIIGGLVLIGIGCNILYEHL).

It belongs to the MntP (TC 9.B.29) family.

It is found in the cell inner membrane. Functionally, probably functions as a manganese efflux pump. The polypeptide is Putative manganese efflux pump MntP (Pectobacterium atrosepticum (strain SCRI 1043 / ATCC BAA-672) (Erwinia carotovora subsp. atroseptica)).